A 415-amino-acid chain; its full sequence is Fructose-like permease IIC component 1 (415 aa).

At 1 to 46 the chain is on the cytoplasmic side; sequence MAIKKRSATVVPGASGAAAAVKNPQASKTSFWGELPQHVMSGISRM. The region spanning 35-410 is the PTS EIIC type-2 domain; the sequence is LPQHVMSGIS…RLMMFRKGKL (376 aa). The helical transmembrane segment at 47 to 67 threads the bilayer; that stretch reads VPTLIMGGVILAFSQLIAYSW. Topologically, residues 68 to 101 are periplasmic; sequence LKIPAEIGIMDALNSGKFSGFDLSLLKFAWLSQS. The helical transmembrane segment at 102–122 threads the bilayer; that stretch reads FGGVLFGFAIPMFAAFVANSI. Topologically, residues 123–126 are cytoplasmic; it reads GGKL. The chain crosses the membrane as a helical span at residues 127 to 147; the sequence is AFPAGFIGGLMSTQPTQLLNF. Residues 148–157 are Periplasmic-facing; the sequence is DPSTMQWATS. A helical membrane pass occupies residues 158–178; it reads SPVPSTFIGALIISIVAGYLV. The Cytoplasmic portion of the chain corresponds to 179–197; sequence KWMNQKIQLPDFLLAFKTT. A helical transmembrane segment spans residues 198–218; that stretch reads FLLPILSAIFVMLAMYYVITP. The Periplasmic portion of the chain corresponds to 219–237; the sequence is FGGWINGGIRTVLTAAGEK. The helical transmembrane segment at 238 to 258 threads the bilayer; the sequence is GALMYAMGIAAATAIDLGGPI. Residues 259-276 lie on the Cytoplasmic side of the membrane; the sequence is NKAAGFVAFSFTTDHVLP. A helical transmembrane segment spans residues 277–297; sequence VTARSIAIVIPPIGLGLATII. Residues 298–318 lie on the Periplasmic side of the membrane; sequence DRRLTGKRLFNAQLYPQGKTA. The helical transmembrane segment at 319–339 threads the bilayer; sequence MFLAFMGISEGAIPFALESPI. The Cytoplasmic portion of the chain corresponds to 340–341; sequence TA. Residues 342-362 traverse the membrane as a helical segment; sequence IPSYMVGAIVGSTAAVWLGAV. Over 363–378 the chain is Periplasmic; sequence QWFPESAIWAWPLVTN. A helical transmembrane segment spans residues 379–399; sequence LGVYMAGIALGAVITALMVVF. At 400–415 the chain is on the cytoplasmic side; the sequence is LRLMMFRKGKLLIDSL.

Its subcellular location is the cell inner membrane. Its function is as follows. The phosphoenolpyruvate-dependent sugar phosphotransferase system (PTS), a major carbohydrate active -transport system, catalyzes the phosphorylation of incoming sugar substrates concomitant with their translocation across the cell membrane. This chain is Fructose-like permease IIC component 1 (fryC), found in Escherichia coli (strain K12).